A 443-amino-acid chain; its full sequence is Trigger factor (443 aa).

A PPIase FKBP-type domain is found at G165 to A250.

Belongs to the FKBP-type PPIase family. Tig subfamily.

The protein resides in the cytoplasm. The catalysed reaction is [protein]-peptidylproline (omega=180) = [protein]-peptidylproline (omega=0). Functionally, involved in protein export. Acts as a chaperone by maintaining the newly synthesized protein in an open conformation. Functions as a peptidyl-prolyl cis-trans isomerase. This Roseobacter denitrificans (strain ATCC 33942 / OCh 114) (Erythrobacter sp. (strain OCh 114)) protein is Trigger factor.